Here is a 218-residue protein sequence, read N- to C-terminus: Octanoyltransferase (218 aa).

The 180-residue stretch at Ile-32 to Ile-211 folds into the BPL/LPL catalytic domain. Residues Arg-75–His-82, Ser-142–Gly-144, and Gly-155–Ser-157 each bind substrate. The active-site Acyl-thioester intermediate is Cys-173.

This sequence belongs to the LipB family.

It localises to the cytoplasm. It carries out the reaction octanoyl-[ACP] + L-lysyl-[protein] = N(6)-octanoyl-L-lysyl-[protein] + holo-[ACP] + H(+). The protein operates within protein modification; protein lipoylation via endogenous pathway; protein N(6)-(lipoyl)lysine from octanoyl-[acyl-carrier-protein]: step 1/2. Its function is as follows. Catalyzes the transfer of endogenously produced octanoic acid from octanoyl-acyl-carrier-protein onto the lipoyl domains of lipoate-dependent enzymes. Lipoyl-ACP can also act as a substrate although octanoyl-ACP is likely to be the physiological substrate. The chain is Octanoyltransferase from Buchnera aphidicola subsp. Schizaphis graminum (strain Sg).